Here is a 400-residue protein sequence, read N- to C-terminus: Argininosuccinate synthase (400 aa).

Position 9–17 (9–17) interacts with ATP; the sequence is AYSGGLDTS. Position 87 (Tyr87) interacts with L-citrulline. Gly117 provides a ligand contact to ATP. Thr119, Asn123, and Asp124 together coordinate L-aspartate. Asn123 lines the L-citrulline pocket. Residues Arg127, Ser176, Ser185, Glu261, and Tyr273 each contribute to the L-citrulline site.

It belongs to the argininosuccinate synthase family. Type 1 subfamily. As to quaternary structure, homotetramer.

It localises to the cytoplasm. It carries out the reaction L-citrulline + L-aspartate + ATP = 2-(N(omega)-L-arginino)succinate + AMP + diphosphate + H(+). The protein operates within amino-acid biosynthesis; L-arginine biosynthesis; L-arginine from L-ornithine and carbamoyl phosphate: step 2/3. In Pelodictyon phaeoclathratiforme (strain DSM 5477 / BU-1), this protein is Argininosuccinate synthase.